A 293-amino-acid polypeptide reads, in one-letter code: Glutamyl-Q tRNA(Asp) synthetase (293 aa).

L-glutamate is bound by residues 26–30 and Asp-62; that span reads RYAPS. Positions 29-39 match the 'HIGH' region motif; it reads PSPTGALHLGN. Positions 118, 120, 131, and 135 each coordinate Zn(2+). Residues Tyr-178 and Arg-196 each coordinate L-glutamate. Residues 234–238 carry the 'KMSKS' region motif; that stretch reads KLSKR. Lys-237 is an ATP binding site.

The protein belongs to the class-I aminoacyl-tRNA synthetase family. GluQ subfamily. It depends on Zn(2+) as a cofactor.

Functionally, catalyzes the tRNA-independent activation of glutamate in presence of ATP and the subsequent transfer of glutamate onto a tRNA(Asp). Glutamate is transferred on the 2-amino-5-(4,5-dihydroxy-2-cyclopenten-1-yl) moiety of the queuosine in the wobble position of the QUC anticodon. In Parasynechococcus marenigrum (strain WH8102), this protein is Glutamyl-Q tRNA(Asp) synthetase.